Here is a 453-residue protein sequence, read N- to C-terminus: Gamma-aminobutyric acid receptor subunit alpha-6 (453 aa).

Residues 1–19 form the signal peptide; sequence MLLLLPWLFSLLWIENAQA. At 20-243 the chain is on the extracellular side; it reads QLEDEGNFYS…FHLQRKMGYF (224 aa). The N-linked (GlcNAc...) asparagine glycan is linked to N31. Residue R84 coordinates 4-aminobutanoate. N-linked (GlcNAc...) asparagine glycans are attached at residues N128 and N141. 4-aminobutanoate is bound at residue T147. The cysteines at positions 156 and 170 are disulfide-linked. Residues 244 to 264 traverse the membrane as a helical segment; that stretch reads MIQIYTPCIMTVILSQVSFWI. The Cytoplasmic segment spans residues 265-270; that stretch reads NKESVP. A helical membrane pass occupies residues 271-290; sequence ARTVFGITTVLTMTTLSISA. The Extracellular segment spans residues 291-304; the sequence is RHSLPKVSYATAMD. Residues 305 to 325 form a helical membrane-spanning segment; it reads WFIAVCFAFVFSALIEFAAVN. At 326-422 the chain is on the cytoplasmic side; it reads YFTNLQSQKA…GTSKIDQYSR (97 aa). Phosphoserine is present on S375. A Phosphothreonine modification is found at T403. The helical transmembrane segment at 423–443 threads the bilayer; that stretch reads ILFPVAFAGFNLVYWIVYLSK. Residues 444–453 lie on the Extracellular side of the membrane; the sequence is DTMEVSSTVE.

The protein belongs to the ligand-gated ion channel (TC 1.A.9) family. Gamma-aminobutyric acid receptor (TC 1.A.9.5) subfamily. GABRA6 sub-subfamily. Heteropentamer, formed by a combination of alpha (GABRA1-6), beta (GABRB1-3), gamma (GABRG1-3), delta (GABRD), epsilon (GABRE), rho (GABRR1-3), pi (GABRP) and theta (GABRQ) chains, each subunit exhibiting distinct physiological and pharmacological properties. Binds UBQLN1. As to expression, expressed in brain, in cerebellar granule cells.

The protein localises to the postsynaptic cell membrane. The protein resides in the cell membrane. It carries out the reaction chloride(in) = chloride(out). In terms of biological role, alpha subunit of the heteropentameric ligand-gated chloride channel gated by gamma-aminobutyric acid (GABA), a major inhibitory neurotransmitter in the brain. GABA-gated chloride channels, also named GABA(A) receptors (GABAAR), consist of five subunits arranged around a central pore and contain GABA active binding site(s) located at the alpha and beta subunit interface(s). When activated by GABA, GABAARs selectively allow the flow of chloride anions across the cell membrane down their electrochemical gradient. Alpha-6/GABRA6 subunits are found at both synaptic and extrasynaptic sites. Chloride influx into the postsynaptic neuron following GABAAR opening decreases the neuron ability to generate a new action potential, thereby reducing nerve transmission. Extrasynaptic alpha-6-containing receptors contribute to the tonic GABAergic inhibition. Alpha-6 subunits are also present on glutamatergic synapses. The protein is Gamma-aminobutyric acid receptor subunit alpha-6 of Rattus norvegicus (Rat).